A 175-amino-acid polypeptide reads, in one-letter code: Interferon gamma (175 aa).

An N-terminal signal peptide occupies residues 1–23; it reads MNATCCILALLLCLTQAISGCYC. Gln24 carries the pyrrolidone carboxylic acid modification. N-linked (GlcNAc...) asparagine glycans are attached at residues Asn39 and Asn106.

Belongs to the type II (or gamma) interferon family. In terms of assembly, homodimer. Interacts with IFNGR1 (via extracellular domain); this interaction promotes IFNGR1 dimerization. As to expression, released primarily from activated T lymphocytes.

It localises to the secreted. Functionally, type II interferon produced by immune cells such as T-cells and NK cells that plays crucial roles in antimicrobial, antiviral, and antitumor responses by activating effector immune cells and enhancing antigen presentation. Primarily signals through the JAK-STAT pathway after interaction with its receptor IFNGR1 to affect gene regulation. Upon IFNG binding, IFNGR1 intracellular domain opens out to allow association of downstream signaling components JAK2, JAK1 and STAT1, leading to STAT1 activation, nuclear translocation and transcription of IFNG-regulated genes. Many of the induced genes are transcription factors such as IRF1 that are able to further drive regulation of a next wave of transcription. Plays a role in class I antigen presentation pathway by inducing a replacement of catalytic proteasome subunits with immunoproteasome subunits. In turn, increases the quantity, quality, and repertoire of peptides for class I MHC loading. Increases the efficiency of peptide generation also by inducing the expression of activator PA28 that associates with the proteasome and alters its proteolytic cleavage preference. Up-regulates as well MHC II complexes on the cell surface by promoting expression of several key molecules such as cathepsins B/CTSB, H/CTSH, and L/CTSL. Participates in the regulation of hematopoietic stem cells during development and under homeostatic conditions by affecting their development, quiescence, and differentiation. The sequence is that of Interferon gamma (IFNG) from Peromyscus maniculatus (North American deer mouse).